The sequence spans 361 residues: tRNA/tmRNA (uracil-C(5))-methyltransferase (361 aa).

5 residues coordinate S-adenosyl-L-methionine: Gln183, Tyr211, Asn216, Glu232, and Asp294. Cys319 (nucleophile) is an active-site residue. The active-site Proton acceptor is Glu353.

The protein belongs to the class I-like SAM-binding methyltransferase superfamily. RNA M5U methyltransferase family. TrmA subfamily.

It carries out the reaction uridine(54) in tRNA + S-adenosyl-L-methionine = 5-methyluridine(54) in tRNA + S-adenosyl-L-homocysteine + H(+). The enzyme catalyses uridine(341) in tmRNA + S-adenosyl-L-methionine = 5-methyluridine(341) in tmRNA + S-adenosyl-L-homocysteine + H(+). Functionally, dual-specificity methyltransferase that catalyzes the formation of 5-methyluridine at position 54 (m5U54) in all tRNAs, and that of position 341 (m5U341) in tmRNA (transfer-mRNA). This Acinetobacter baumannii (strain AB307-0294) protein is tRNA/tmRNA (uracil-C(5))-methyltransferase.